The chain runs to 36 residues: Tddefensin (36 aa).

Intrachain disulfides connect Cys3-Cys24, Cys10-Cys32, and Cys14-Cys34.

It belongs to the invertebrate defensin family. In terms of tissue distribution, expressed by the venom gland.

Its subcellular location is the secreted. Antibacterial peptide mostly active against Gram-positive bacteria. The sequence is that of Tddefensin from Tityus discrepans (Venezuelan scorpion).